The primary structure comprises 339 residues: Dihydroorotate dehydrogenase (quinone) (339 aa).

Residues 62–66 (AGMDK) and T86 each bind FMN. K66 contributes to the substrate binding site. 111–115 (NRMGF) lines the substrate pocket. Residues N139 and N172 each coordinate FMN. Residue N172 coordinates substrate. S175 acts as the Nucleophile in catalysis. Residue N177 participates in substrate binding. FMN is bound by residues K217 and T245. 246-247 (NT) contributes to the substrate binding site. FMN is bound by residues G268, G297, and 318–319 (YS).

It belongs to the dihydroorotate dehydrogenase family. Type 2 subfamily. In terms of assembly, monomer. Requires FMN as cofactor.

It localises to the cell membrane. It carries out the reaction (S)-dihydroorotate + a quinone = orotate + a quinol. It functions in the pathway pyrimidine metabolism; UMP biosynthesis via de novo pathway; orotate from (S)-dihydroorotate (quinone route): step 1/1. Its function is as follows. Catalyzes the conversion of dihydroorotate to orotate with quinone as electron acceptor. The protein is Dihydroorotate dehydrogenase (quinone) of Shewanella sp. (strain MR-4).